A 210-amino-acid polypeptide reads, in one-letter code: Pyridoxine/pyridoxamine 5'-phosphate oxidase (210 aa).

Substrate is bound by residues 7 to 10 and K65; that span reads REDY. FMN is bound by residues 60–65, 75–76, R81, K82, and Q104; these read RMVLLK and FT. Residues Y122, R126, and S130 each contribute to the substrate site. FMN-binding positions include 139 to 140 and W183; that span reads QS. 189–191 serves as a coordination point for substrate; it reads RLH. R193 is an FMN binding site.

Belongs to the pyridoxamine 5'-phosphate oxidase family. As to quaternary structure, homodimer. FMN serves as cofactor.

It catalyses the reaction pyridoxamine 5'-phosphate + O2 + H2O = pyridoxal 5'-phosphate + H2O2 + NH4(+). The enzyme catalyses pyridoxine 5'-phosphate + O2 = pyridoxal 5'-phosphate + H2O2. It functions in the pathway cofactor metabolism; pyridoxal 5'-phosphate salvage; pyridoxal 5'-phosphate from pyridoxamine 5'-phosphate: step 1/1. The protein operates within cofactor metabolism; pyridoxal 5'-phosphate salvage; pyridoxal 5'-phosphate from pyridoxine 5'-phosphate: step 1/1. Catalyzes the oxidation of either pyridoxine 5'-phosphate (PNP) or pyridoxamine 5'-phosphate (PMP) into pyridoxal 5'-phosphate (PLP). The chain is Pyridoxine/pyridoxamine 5'-phosphate oxidase from Neisseria gonorrhoeae (strain ATCC 700825 / FA 1090).